We begin with the raw amino-acid sequence, 400 residues long: S-adenosylmethionine decarboxylase proenzyme (400 aa).

Active-site residues include Glu18 and Glu21. The Schiff-base intermediate with substrate; via pyruvic acid role is filled by Ser78. At Ser78 the chain carries Pyruvic acid (Ser); by autocatalysis. Cys92 (proton donor; for catalytic activity) is an active-site residue. Residues Ser243 and His256 each act as proton acceptor; for processing activity in the active site.

It belongs to the eukaryotic AdoMetDC family. The cofactor is pyruvate. In terms of processing, is synthesized initially as an inactive proenzyme. Formation of the active enzyme involves a self-maturation process in which the active site pyruvoyl group is generated from an internal serine residue via an autocatalytic post-translational modification. Two non-identical subunits are generated from the proenzyme in this reaction, and the pyruvate is formed at the N-terminus of the alpha chain, which is derived from the carboxyl end of the proenzyme. The post-translation cleavage follows an unusual pathway, termed non-hydrolytic serinolysis, in which the side chain hydroxyl group of the serine supplies its oxygen atom to form the C-terminus of the beta chain, while the remainder of the serine residue undergoes an oxidative deamination to produce ammonia and the pyruvoyl group blocking the N-terminus of the alpha chain.

It carries out the reaction S-adenosyl-L-methionine + H(+) = S-adenosyl 3-(methylsulfanyl)propylamine + CO2. Its pathway is amine and polyamine biosynthesis; S-adenosylmethioninamine biosynthesis; S-adenosylmethioninamine from S-adenosyl-L-methionine: step 1/1. This chain is S-adenosylmethionine decarboxylase proenzyme (SAMDC), found in Zea mays (Maize).